Here is a 261-residue protein sequence, read N- to C-terminus: Lysoplasmalogenase (261 aa).

The next 8 membrane-spanning stretches (helical) occupy residues 29–49 (GWVVAGWAGLAYGVYLTVIAL), 65–85 (PAFKASMAVLLAAAAVAHPIG), 90–107 (WLVPALLLSATGDWLLAI), 111–133 (TWAFVFGLGAFLLAHLCFIGALL), 146–166 (VAAVVAMCVASAGLLVWFWPH), 172–192 (LTIPVTVYIVALSAMVCTALL), 197–217 (TIWTAVGAVCFAASDSMIGIG), and 227–247 (AVPIWWSYAAAEILITAGFFF).

This sequence belongs to the TMEM86 family.

The protein resides in the cell membrane. The catalysed reaction is a 1-O-(1Z-alkenyl)-sn-glycero-3-phosphocholine + H2O = a 2,3-saturated aldehyde + sn-glycerol 3-phosphocholine. It carries out the reaction a 1-O-(1Z-alkenyl)-sn-glycero-3-phosphoethanolamine + H2O = a 2,3-saturated aldehyde + sn-glycero-3-phosphoethanolamine. Its function is as follows. Specifically hydrolyzes the vinyl ether bond of lysoplasmenylcholine (pLPC) and lysoplasmenylethanolamine (pLPE) to release a fatty aldehyde and glycerophospho-choline or glycerophospho-ethanolamine. The protein is Lysoplasmalogenase of Mycobacterium bovis (strain ATCC BAA-935 / AF2122/97).